We begin with the raw amino-acid sequence, 461 residues long: Argininosuccinate lyase (461 aa).

The protein belongs to the lyase 1 family. Argininosuccinate lyase subfamily.

It is found in the cytoplasm. It catalyses the reaction 2-(N(omega)-L-arginino)succinate = fumarate + L-arginine. The protein operates within amino-acid biosynthesis; L-arginine biosynthesis; L-arginine from L-ornithine and carbamoyl phosphate: step 3/3. The polypeptide is Argininosuccinate lyase (Nitrosomonas eutropha (strain DSM 101675 / C91 / Nm57)).